Here is an 881-residue protein sequence, read N- to C-terminus: Serine/threonine-protein kinase/endoribonuclease IRE1b (881 aa).

The signal sequence occupies residues 1-21 (MRGSALLDLILFLLVSPLAHS). Topologically, residues 22–357 (FKGSEISKFY…KQAGFASKFS (336 aa)) are lumenal. An N-linked (GlcNAc...) asparagine glycan is attached at Asn115. A helical transmembrane segment spans residues 358 to 378 (GLIVLIFGFCVTMLSVCGLFF). Residues 379-881 (YRLRQSIRIK…FFKYSKTTVF (503 aa)) are Cytoplasmic-facing. The Protein kinase domain occupies 459–744 (FVSNKEIAKG…AQDVMHHPLF (286 aa)). Residues 465–473 (IAKGSNGTV) and Lys487 each bind ATP. Positions 481–502 (GRLVAVKRLVQSHHDVAQKEIL) are ATP selon article. The active-site Proton acceptor is the Asp608. The tract at residues 642–661 (LTRNSTGLGSGSSGWQAPEQ) is disordered. The KEN domain maps to 747–878 (SDMRLSFLRD…EEFFFKYSKT (132 aa)).

Belongs to the protein kinase superfamily. Ser/Thr protein kinase family. In terms of assembly, homodimer; disulfide-linked. Dimer formation is driven by hydrophobic interactions within the N-terminal luminal domains and stabilized by disulfide bridges. Mg(2+) is required as a cofactor. Post-translationally, autophosphorylated. In terms of tissue distribution, ubiquitous. Detected in the apical meristem, at leaf margins where vascular bundles end, in the anthers before pollen is formed and in the ovules at a very early stage of development. There is no expression in more mature embryos. Also strongly expressed in the cotyledons immediately after germination but not later on.

The protein localises to the endoplasmic reticulum membrane. The catalysed reaction is L-seryl-[protein] + ATP = O-phospho-L-seryl-[protein] + ADP + H(+). The enzyme catalyses L-threonyl-[protein] + ATP = O-phospho-L-threonyl-[protein] + ADP + H(+). Its activity is regulated as follows. The kinase domain is activated by trans-autophosphorylation. Kinase activity is required for activation of the endoribonuclease domain. Its function is as follows. Senses unfolded proteins in the lumen of the endoplasmic reticulum via its N-terminal domain which leads to enzyme auto-activation. The active endoribonuclease domain splices bZIP60 mRNA to generate a new C-terminus, converting it into a potent unfolded-protein response transcriptional activator which then induces transcription of UPR target genes. Involved in organ growth regulation. Plays a role in plant immunity and abiotic stress responses. Required for ER stress-induced autophagy. This chain is Serine/threonine-protein kinase/endoribonuclease IRE1b (IRE1B), found in Arabidopsis thaliana (Mouse-ear cress).